The chain runs to 274 residues: Bis(5'-nucleosyl)-tetraphosphatase, symmetrical (274 aa).

Belongs to the Ap4A hydrolase family.

It carries out the reaction P(1),P(4)-bis(5'-adenosyl) tetraphosphate + H2O = 2 ADP + 2 H(+). Functionally, hydrolyzes diadenosine 5',5'''-P1,P4-tetraphosphate to yield ADP. The sequence is that of Bis(5'-nucleosyl)-tetraphosphatase, symmetrical from Shewanella baltica (strain OS185).